We begin with the raw amino-acid sequence, 492 residues long: Transcript termination protein OPG145 (492 aa).

A Helicase ATP-binding domain is found at 100-256 (MIELKRPLYI…NSIINIAKLS (157 aa)). Position 113-120 (113-120 (LACGFGKT)) interacts with ATP. The short motif at 206–209 (DESH) is the DEAH box element.

The protein belongs to the helicase family. Poxviruses subfamily. In terms of assembly, interacts with OPG087. Might be part of a transcription complex composed at least of OPG087, OPG110, and OPG145.

It localises to the virion. DNA helicase which seems to act as a postreplicative transcription termination factor. Involved in ATP-dependent release of nascent RNA. Forms a stable complex with single-stranded DNA, and to a lesser extent RNA. In Cynomys gunnisoni (Gunnison's prairie dog), this protein is Transcript termination protein OPG145 (OPG145).